The following is a 375-amino-acid chain: Probable G-protein coupled receptor 27 (375 aa).

The Extracellular segment spans residues 1–23 (MANASEPGGSGGGEAAALGLKLA). Asn3 carries N-linked (GlcNAc...) asparagine glycosylation. A helical transmembrane segment spans residues 24–44 (TLSLLLCVSLAGNVLFALLIV). Residues 45 to 55 (RERSLHRAPYY) are Cytoplasmic-facing. Residues 56–76 (LLLDLCLADGLRALACLPAVM) form a helical membrane-spanning segment. Over 77–97 (LAARRAAAAAGAPPGALGCKL) the chain is Extracellular. An intrachain disulfide couples Cys95 to Cys171. A helical membrane pass occupies residues 98–118 (LAFLAALFCFHAAFLLLGVGV). The Cytoplasmic segment spans residues 119 to 139 (TRYLAIAHHRFYAERLAGWPC). The chain crosses the membrane as a helical span at residues 140–160 (AAMLVCAAWALALAAAFPPVL). Residues 161–181 (DGGGDDEDAPCALEQRPDGAP) lie on the Extracellular side of the membrane. Residues 182 to 202 (GALGFLLLLAVVVGATHLVYL) form a helical membrane-spanning segment. The Cytoplasmic segment spans residues 203–285 (RLLFFIHDRR…FKTEKRLCKM (83 aa)). Residues 286 to 306 (FYAVTLLFLLLWGPYVVASYL) traverse the membrane as a helical segment. The Extracellular segment spans residues 307–320 (RVLVRPGAVPQAYL). A helical membrane pass occupies residues 321 to 341 (TASVWLTFAQAGINPVVCFLF). Over 342 to 375 (NRELRDCFRAQFPCCQSPRTTQATHPCDLKGIGL) the chain is Cytoplasmic.

It belongs to the G-protein coupled receptor 1 family. Highly expressed as a 3.0 kb transcript in brain, ovary, testis, heart, prostate and peripheral Leukocytes. Lower levels in pancreas and small intestine. A 2.3 kb transcript was also found in peripheral Leukocytes. In brain regions, detected as a 3.0 kb transcript in all regions tested. Highest levels in the caudate nucleus, putamen, hippocampus and subthalamic nucleus. Lowest level in the cerebellum.

The protein localises to the cell membrane. Functionally, orphan receptor. Possible candidate for amine-like G-protein coupled receptor. In Homo sapiens (Human), this protein is Probable G-protein coupled receptor 27 (GPR27).